The following is a 444-amino-acid chain: Trigger factor (444 aa).

Residues 166 to 251 (GDQVVIDFKG…VKAVKAPKAA (86 aa)) enclose the PPIase FKBP-type domain.

This sequence belongs to the FKBP-type PPIase family. Tig subfamily.

It localises to the cytoplasm. The enzyme catalyses [protein]-peptidylproline (omega=180) = [protein]-peptidylproline (omega=0). Involved in protein export. Acts as a chaperone by maintaining the newly synthesized protein in an open conformation. Functions as a peptidyl-prolyl cis-trans isomerase. The polypeptide is Trigger factor (Cereibacter sphaeroides (strain ATCC 17029 / ATH 2.4.9) (Rhodobacter sphaeroides)).